The chain runs to 231 residues: 5'-methylthioadenosine/S-adenosylhomocysteine nucleosidase (231 aa).

E12 serves as the catalytic Proton acceptor. Residues G78, M153, and 174–175 (ME) each bind substrate. The Proton donor role is filled by D198.

This sequence belongs to the PNP/UDP phosphorylase family. MtnN subfamily.

It carries out the reaction S-adenosyl-L-homocysteine + H2O = S-(5-deoxy-D-ribos-5-yl)-L-homocysteine + adenine. The catalysed reaction is S-methyl-5'-thioadenosine + H2O = 5-(methylsulfanyl)-D-ribose + adenine. The enzyme catalyses 5'-deoxyadenosine + H2O = 5-deoxy-D-ribose + adenine. It functions in the pathway amino-acid biosynthesis; L-methionine biosynthesis via salvage pathway; S-methyl-5-thio-alpha-D-ribose 1-phosphate from S-methyl-5'-thioadenosine (hydrolase route): step 1/2. Its function is as follows. Catalyzes the irreversible cleavage of the glycosidic bond in both 5'-methylthioadenosine (MTA) and S-adenosylhomocysteine (SAH/AdoHcy) to adenine and the corresponding thioribose, 5'-methylthioribose and S-ribosylhomocysteine, respectively. Also cleaves 5'-deoxyadenosine, a toxic by-product of radical S-adenosylmethionine (SAM) enzymes, into 5-deoxyribose and adenine. This Bacillus cereus (strain G9842) protein is 5'-methylthioadenosine/S-adenosylhomocysteine nucleosidase.